The following is a 114-amino-acid chain: Fumarate reductase subunit D (114 aa).

The next 3 helical transmembrane spans lie at 27-47, 50-70, and 94-114; these read ICFPVLLLILGVLLPLGLVPV, IVAFAHTWFGKLVILAVTIFP, and WVFYGLSALYSVIVFFAVIAL.

The protein belongs to the FrdD family. As to quaternary structure, part of an enzyme complex containing four subunits: a flavoprotein (FrdA), an iron-sulfur protein (FrdB), and two hydrophobic anchor proteins (FrdC and FrdD).

The protein resides in the cell inner membrane. Anchors the catalytic components of the fumarate reductase complex to the cell membrane, binds quinones. In Actinobacillus pleuropneumoniae serotype 3 (strain JL03), this protein is Fumarate reductase subunit D.